We begin with the raw amino-acid sequence, 363 residues long: MFAFTPYSSFWVELRKITSLQLLSSRRLELLKHVRISEMEISMKQLYKIWSKKKDGSGRVLVEMKKLFGDLTLNVVLRMVAGKRYFGGGNANDDEEARRCRRVWREFFRLHGVFVVADSLPFLRWLDLGGYEKAMKKTAKEMDNIVSGWLEEHRMKRNSSDEDNTQQDFMDVMLSAVKNVDLCGFDADVVIKSTCMVLIASGTDTVGVELTWALSLLLNNRHALKKAQEELDNVVGKQRQVKESDLNNLVYLHAIIKETLRLYPAAQLGVRREFYEDCTVAGYHVPKGTLLAVNLWTLHRDPIIWSDPTEFRPERFLNMPKEVDVKGQHFELIPFGVGRRLCPGIAFGLQMLHLVLATLLHGF.

Position 342 (Cys-342) interacts with heme.

Belongs to the cytochrome P450 family. Requires heme as cofactor.

In terms of biological role, probable heme-thiolate monooxygenase. This is Cytochrome P450 CYP82D47 from Panax ginseng (Korean ginseng).